The following is a 292-amino-acid chain: Early E4 34 kDa protein (292 aa).

It belongs to the adenoviridae E4 30 to 34 kDa protein family. In terms of assembly, interacts with E1B-55k.

The protein localises to the host nucleus. Its subcellular location is the host cytoplasm. In terms of biological role, plays a major role to prevent cellular inhibition of viral genome replication by nuclear bodies. Assembles an SCF-like E3 ubiquitin ligase complex based on the cellular proteins ELOB, ELOC, CUL5 and RBX1, in cooperation with viral E1B-55K. This viral RING-type ligase ubiquitinates cellular substrates prior to proteasomal degradation: p53/TP53, LIG4, MRE11-RAD50-NBS1 (MRN) complex, ITGA3, DAXX and BLM. This chain is Early E4 34 kDa protein, found in Human adenovirus D serotype 9 (HAdV-9).